We begin with the raw amino-acid sequence, 310 residues long: MNVGILGIGRYVPEKVVTNHDLEKIMDTSDEWIRTRTGIAERRIADDTIDTSYMAVEASKKALEDAGISGEDIDLILVATVTPDRAFPAVACVIQEAIGAKHAAAMDLSAACAGFMYGMITAQQFIQTGTYKNVLVVGSDKLSKIVDWNDRNTAVLFGDGAGAIVMGAVSEGKGVLSFELGADGSGGKHLYQDEYVMMNGREVFKFAVRQLGDSCLRVLDKAGLTKEDVDFLVPHQANIRIMESARERLNLPQEKMSMTIEKFGNTSASSIPIAMVEELQNGRIQDGDLIILVGFGGGLTWGAVALRWGK.

Active-site residues include Cys-112 and His-235. The segment at 236 to 240 (QANIR) is ACP-binding. Asn-265 is a catalytic residue.

It belongs to the thiolase-like superfamily. FabH family. Homodimer.

It is found in the cytoplasm. It carries out the reaction malonyl-[ACP] + acetyl-CoA + H(+) = 3-oxobutanoyl-[ACP] + CO2 + CoA. It functions in the pathway lipid metabolism; fatty acid biosynthesis. In terms of biological role, catalyzes the condensation reaction of fatty acid synthesis by the addition to an acyl acceptor of two carbons from malonyl-ACP. Catalyzes the first condensation reaction which initiates fatty acid synthesis and may therefore play a role in governing the total rate of fatty acid production. Possesses both acetoacetyl-ACP synthase and acetyl transacylase activities. Its substrate specificity determines the biosynthesis of branched-chain and/or straight-chain of fatty acids. This chain is Beta-ketoacyl-[acyl-carrier-protein] synthase III 1, found in Bacillus anthracis.